The primary structure comprises 174 residues: Repair DNA polymerase X (174 aa).

Positions 42–51 (REEKMLNDVD) are involved in ssDNA binding. Residues D49 and D51 each contribute to the Mg(2+) site. An intrachain disulfide couples C81 to C86. D100 is a binding site for Mg(2+).

This sequence belongs to the DNA polymerase type-X family. The cofactor is Mg(2+).

The protein localises to the virion. It catalyses the reaction DNA(n) + a 2'-deoxyribonucleoside 5'-triphosphate = DNA(n+1) + diphosphate. Error-prone polymerase lacking a proofreading 3'-5' exonuclease which catalyzes the gap-filling reaction during the DNA repair process. Specifically binds intermediates in the single-nucleotide base-excision repair process. Also catalyzes DNA polymerization with low nucleotide-insertion fidelity. Probably acts as a strategic DNA mutase, which gives rise to a rapid emergence of variants. Generates mismatched G-G pairs, in that case, the polymerase first binds the deoxynucleotide followed by mismatch formation. Together with the viral DNA ligase, fills the single nucleotide gaps generated by the AP endonuclease. Binds DNA with high affinity via the helix alphaE. The chain is Repair DNA polymerase X from African swine fever virus (isolate Tick/South Africa/Pretoriuskop Pr4/1996) (ASFV).